A 92-amino-acid polypeptide reads, in one-letter code: RNA-binding protein Hfq (92 aa).

In terms of domain architecture, Sm spans 11 to 71 (DRFLNHLRVN…ISTIIPSSYV (61 aa)).

It belongs to the Hfq family. Homohexamer.

Its function is as follows. RNA chaperone that binds small regulatory RNA (sRNAs) and mRNAs to facilitate mRNA translational regulation in response to envelope stress, environmental stress and changes in metabolite concentrations. Also binds with high specificity to tRNAs. In Thermotoga maritima (strain ATCC 43589 / DSM 3109 / JCM 10099 / NBRC 100826 / MSB8), this protein is RNA-binding protein Hfq.